A 228-amino-acid chain; its full sequence is ATP phosphoribosyltransferase (228 aa).

The protein belongs to the ATP phosphoribosyltransferase family. Short subfamily. As to quaternary structure, heteromultimer composed of HisG and HisZ subunits.

The protein localises to the cytoplasm. The enzyme catalyses 1-(5-phospho-beta-D-ribosyl)-ATP + diphosphate = 5-phospho-alpha-D-ribose 1-diphosphate + ATP. Its pathway is amino-acid biosynthesis; L-histidine biosynthesis; L-histidine from 5-phospho-alpha-D-ribose 1-diphosphate: step 1/9. Functionally, catalyzes the condensation of ATP and 5-phosphoribose 1-diphosphate to form N'-(5'-phosphoribosyl)-ATP (PR-ATP). Has a crucial role in the pathway because the rate of histidine biosynthesis seems to be controlled primarily by regulation of HisG enzymatic activity. The chain is ATP phosphoribosyltransferase from Moorella thermoacetica (strain ATCC 39073 / JCM 9320).